A 205-amino-acid polypeptide reads, in one-letter code: Gap junction epsilon-1 protein (205 aa).

Topologically, residues 1–23 (MSLNYIKNFYEGCVKPPTVIGQF) are cytoplasmic. Residues 24-44 (HTLFFGSIRIFFLGVLGFAVY) traverse the membrane as a helical segment. The Extracellular portion of the chain corresponds to 45 to 76 (GNEALHFICDPDKREVNLFCYNQFRPITPQVS). 2 disulfide bridges follow: Cys53/Cys161 and Cys64/Cys148. The chain crosses the membrane as a helical span at residues 77-97 (FSALQLVIVLVPGALFHLYAA). The Cytoplasmic portion of the chain corresponds to 98–112 (CKSINQECILQKPIY). The chain crosses the membrane as a helical span at residues 113–133 (TIIYILSVLLRISLAAIAFWL). Residues 134–170 (QIYLFGFQVKSLYLCDARSLGENMIIRCMVPEHFEKT) are Extracellular-facing. Residues 171-191 (IFLIAINTFTTITILLFVAEI) form a helical membrane-spanning segment. Residues 192–205 (FEIIFRRLYFPFRQ) lie on the Cytoplasmic side of the membrane.

The protein belongs to the connexin family. Beta-type (group I) subfamily. In terms of assembly, a connexon is composed of a hexamer of connexins. Not detected in lens or retina.

The protein localises to the cell membrane. Mediates calcium-independent ATP release, suggesting activity as a hemichannel. Does not form functional gap junctions. The sequence is that of Gap junction epsilon-1 protein (GJE1) from Homo sapiens (Human).